Reading from the N-terminus, the 149-residue chain is Transcription antitermination protein NusB (149 aa).

Belongs to the NusB family.

In terms of biological role, involved in transcription antitermination. Required for transcription of ribosomal RNA (rRNA) genes. Binds specifically to the boxA antiterminator sequence of the ribosomal RNA (rrn) operons. The chain is Transcription antitermination protein NusB from Caulobacter vibrioides (strain ATCC 19089 / CIP 103742 / CB 15) (Caulobacter crescentus).